The following is a 166-amino-acid chain: NAD(P)H-quinone oxidoreductase subunit I, chloroplastic (166 aa).

4Fe-4S ferredoxin-type domains are found at residues 55–84 (GRIHFEFDKCIACEVCVRVCPIDLPVVDWK) and 95–124 (LNYSIDFGICIFCGNCVEYCPTNCLSMTEE). Residues cysteine 64, cysteine 67, cysteine 70, cysteine 74, cysteine 104, cysteine 107, cysteine 110, and cysteine 114 each coordinate [4Fe-4S] cluster.

This sequence belongs to the complex I 23 kDa subunit family. As to quaternary structure, NDH is composed of at least 16 different subunits, 5 of which are encoded in the nucleus. The cofactor is [4Fe-4S] cluster.

The protein localises to the plastid. The protein resides in the chloroplast thylakoid membrane. The catalysed reaction is a plastoquinone + NADH + (n+1) H(+)(in) = a plastoquinol + NAD(+) + n H(+)(out). The enzyme catalyses a plastoquinone + NADPH + (n+1) H(+)(in) = a plastoquinol + NADP(+) + n H(+)(out). NDH shuttles electrons from NAD(P)H:plastoquinone, via FMN and iron-sulfur (Fe-S) centers, to quinones in the photosynthetic chain and possibly in a chloroplast respiratory chain. The immediate electron acceptor for the enzyme in this species is believed to be plastoquinone. Couples the redox reaction to proton translocation, and thus conserves the redox energy in a proton gradient. This Stevia rebaudiana (Stevia) protein is NAD(P)H-quinone oxidoreductase subunit I, chloroplastic.